A 403-amino-acid chain; its full sequence is 4-hydroxyphenylpyruvate dioxygenase (403 aa).

2 consecutive VOC domains span residues 25-169 (GYDH…LVER) and 201-359 (RIDH…LFTK). Residues H204, H287, and E370 each contribute to the Fe cation site.

Belongs to the 4HPPD family. Homodimer. Fe cation is required as a cofactor.

The catalysed reaction is 3-(4-hydroxyphenyl)pyruvate + O2 = homogentisate + CO2. It participates in amino-acid degradation; L-phenylalanine degradation; acetoacetate and fumarate from L-phenylalanine: step 3/6. Functionally, 4-hydroxyphenylpyruvate dioxygenase; part of the L-tyrosine degradation gene cluster that mediates the biosynthesis of the brownish pigment pyomelanin as an alternative melanin. The 4-hydroxyphenylpyruvate dioxygenase hppD catalyzes the conversion of 4-hydroxyphenylpyruvate to homogentisic acid (HGA). The protein hmgX is crucial for this conversion and thus, probably functions as an accessory factor to mediate specific activity of hppD. The homogentisate 1,2-dioxygenase hmgA is then involved in the cleavage of the aromatic ring of HGA and its conversion to 4-maleylacetoacetate. When hmgA activity is lowered by the cell wall integrity (CWI) signaling pathway, HGA accumulates and leads to the production of pyomelanin through benzoquinone acetic acid after oxidation and polymerization. On the opposite, in non-stress conditions, both hppD and hmgA activities are balanced and HGA is degraded into 4-maleylacetoacetate. 4-maleylacetoacetate is further converted to 4-fumarylacetoacetate by the maleylacetoacetate isomerase maiA, which is degraded into fumarate and acetoacetate by the fumarylacetoacetase fahA. This chain is 4-hydroxyphenylpyruvate dioxygenase, found in Aspergillus fumigatus (strain ATCC MYA-4609 / CBS 101355 / FGSC A1100 / Af293) (Neosartorya fumigata).